We begin with the raw amino-acid sequence, 223 residues long: Phosphoribosylformylglycinamidine synthase subunit PurQ (223 aa).

The Glutamine amidotransferase type-1 domain maps to 4-223 (FAVIVFPGTN…FKSIVEWMKK (220 aa)). The active-site Nucleophile is the cysteine 85. Catalysis depends on residues histidine 196 and glutamate 198.

Part of the FGAM synthase complex composed of 1 PurL, 1 PurQ and 2 PurS subunits.

The protein resides in the cytoplasm. It carries out the reaction N(2)-formyl-N(1)-(5-phospho-beta-D-ribosyl)glycinamide + L-glutamine + ATP + H2O = 2-formamido-N(1)-(5-O-phospho-beta-D-ribosyl)acetamidine + L-glutamate + ADP + phosphate + H(+). The catalysed reaction is L-glutamine + H2O = L-glutamate + NH4(+). Its pathway is purine metabolism; IMP biosynthesis via de novo pathway; 5-amino-1-(5-phospho-D-ribosyl)imidazole from N(2)-formyl-N(1)-(5-phospho-D-ribosyl)glycinamide: step 1/2. In terms of biological role, part of the phosphoribosylformylglycinamidine synthase complex involved in the purines biosynthetic pathway. Catalyzes the ATP-dependent conversion of formylglycinamide ribonucleotide (FGAR) and glutamine to yield formylglycinamidine ribonucleotide (FGAM) and glutamate. The FGAM synthase complex is composed of three subunits. PurQ produces an ammonia molecule by converting glutamine to glutamate. PurL transfers the ammonia molecule to FGAR to form FGAM in an ATP-dependent manner. PurS interacts with PurQ and PurL and is thought to assist in the transfer of the ammonia molecule from PurQ to PurL. In Pyrococcus horikoshii (strain ATCC 700860 / DSM 12428 / JCM 9974 / NBRC 100139 / OT-3), this protein is Phosphoribosylformylglycinamidine synthase subunit PurQ.